The primary structure comprises 539 residues: Gamma-2-syntrophin (539 aa).

The region spanning 73–156 is the PDZ domain; sequence TVTLRRQPVG…EVTITVEYLR (84 aa). 2 stretches are compositionally biased toward low complexity: residues 168–183 and 194–205; these read SPGP…SSPL and SSTTAPSSPSSP. The segment at 168-209 is disordered; sequence SPGPSSDHSSGASSPLFDSGLHLNGNSSTTAPSSPSSPIAKD. In terms of domain architecture, PH spans 296 to 421; it reads QVVHMGWVNE…WEKSFQRATF (126 aa).

It belongs to the syntrophin family. In terms of assembly, interacts with the dystrophin protein DMD and related proteins DTNA and DTNB. As to expression, widely expressed. Strong expression in brain and testis. In CNS, it is expressed in the perikaryon and proximal portion of the neuronal processes. Strong expression in the hippocampus, neuron-rich dendate granule cells, and pyramidal cell layers. Highly expressed in neurons of the cerebral cortex. Also expressed in the cerebellar cortex, deep cerebellar nuclei, thalamus, and basal ganglia.

Its subcellular location is the cell membrane. It is found in the sarcolemma. The protein localises to the cytoplasm. It localises to the cytoskeleton. Adapter protein that binds to and probably organizes the subcellular localization of a variety of proteins. May link various receptors to the actin cytoskeleton and the dystrophin glycoprotein complex. In Homo sapiens (Human), this protein is Gamma-2-syntrophin (SNTG2).